Reading from the N-terminus, the 978-residue chain is Chaperone protein ClpB2, chloroplastic (978 aa).

The N-terminal 76 residues, 1-76 (MAAAPPLAAG…RMPPRTLSVR (76 aa)), are a transit peptide targeting the chloroplast. In terms of domain architecture, Clp R spans 85 to 229 (TQQEFTEMAW…KTAIESIRGK (145 aa)). Repeat stretches follow at residues 89-154 (FTEM…IQRQ) and 166-229 (LGRD…IRGK). The tract at residues 244 to 492 (LDKYGKDLTA…KLKMEITSKP (249 aa)) is i. ATP-binding positions include 289–296 (GEPGVGKT) and 692–699 (GPTGVGKT). The segment at 618 to 809 (VTQDDIAEIV…IIIMTSNVGS (192 aa)) is II.

This sequence belongs to the ClpA/ClpB family.

It localises to the plastid. Its subcellular location is the chloroplast. Functionally, molecular chaperone that may play a role in chloroplast development. This Oryza sativa subsp. japonica (Rice) protein is Chaperone protein ClpB2, chloroplastic (CLPB2).